The primary structure comprises 91 residues: Non-specific lipid-transfer protein P5 (91 aa).

4 cysteine pairs are disulfide-bonded: Cys-3/Cys-50, Cys-13/Cys-27, Cys-28/Cys-73, and Cys-48/Cys-87.

Its subcellular location is the secreted. Its function is as follows. Plant non-specific lipid-transfer proteins transfer phospholipids as well as galactolipids across membranes. May play a role in wax or cutin deposition in the cell walls of expanding epidermal cells and certain secretory tissues. This Vitis sp. (Grape) protein is Non-specific lipid-transfer protein P5.